We begin with the raw amino-acid sequence, 236 residues long: Activating transcription factor of chaperone (236 aa).

A disordered region spans residues 117–185 (HRASQLASPQ…KNAATRYRQK (69 aa)). A compositionally biased stretch (low complexity) spans 120 to 137 (SQLASPQHSSSSANASPR). Positions 162–175 (RPVDDRRSRKKEQN) are enriched in basic and acidic residues. Residues 165-228 (DDRRSRKKEQ…RYLKALMRDL (64 aa)) form the bZIP domain. Residues 167-187 (RRSRKKEQNKNAATRYRQKKK) form a basic motif region. Positions 193–228 (LLKEEQTLRQRHTELGEKCSDLQREIRYLKALMRDL) are leucine-zipper.

This sequence belongs to the bZIP family. In terms of assembly, binds DNA as a dimer.

The protein resides in the nucleus. Transcriptional activator that acts in the unfolded protein response (UPR) pathway. Acts during endoplasmic reticulum (ER) stress by activating UPR target genes via direct binding to the UPR element (UPRE) (5'-GGAACTGGACAGCGTGTCGAAA-3'). Activates expression of ER chaperones ERP72 and PDI. The chain is Activating transcription factor of chaperone from Bombyx mori (Silk moth).